The following is a 233-amino-acid chain: Adenosine 5'-phosphosulfate reductase (233 aa).

[4Fe-4S] cluster is bound by residues Cys120, Cys121, Cys203, and Cys206. The active-site Nucleophile; cysteine thiosulfonate intermediate is Cys229.

This sequence belongs to the PAPS reductase family. CysH subfamily. Requires [4Fe-4S] cluster as cofactor.

Its subcellular location is the cytoplasm. The catalysed reaction is [thioredoxin]-disulfide + sulfite + AMP + 2 H(+) = adenosine 5'-phosphosulfate + [thioredoxin]-dithiol. It participates in sulfur metabolism; hydrogen sulfide biosynthesis; sulfite from sulfate. In terms of biological role, catalyzes the formation of sulfite from adenosine 5'-phosphosulfate (APS) using thioredoxin as an electron donor. In Lysinibacillus sphaericus (strain C3-41), this protein is Adenosine 5'-phosphosulfate reductase.